The following is a 793-amino-acid chain: Translocase of chloroplast 90, chloroplastic (793 aa).

The interval 22-59 (LGSDPFFRDPHQEQDNHSQAPAAPQPVTLSEPPCSTSS) is disordered. Residues 27-37 (FFRDPHQEQDN) are compositionally biased toward basic and acidic residues. A coiled-coil region spans residues 130–157 (LIRAEESELKNVKLRQDRAKALAREQES). In terms of domain architecture, AIG1-type G spans 164–394 (DFSLRILVLG…FRDSIGLGQP (231 aa)). Residues 173-180 (GKTGVGKS) are G1. Residues 176–181 (GVGKSA) and 195–200 (DAFRPG) contribute to the GTP site. Ser-180 is a binding site for Mg(2+). The interval 195–198 (DAFR) is homodimerization. The G2 stretch occupies residues 199-203 (PGTDR). The tract at residues 220-223 (DTPG) is G3. The interval 259–264 (RLDMID) is homodimerization. A helical transmembrane segment spans residues 279-297 (IFGAAIWLNTILVMTHSAA). A G4 region spans residues 293–296 (THSA). GTP contacts are provided by residues His-294 and 341–342 (EN). The interval 341–343 (ENH) is G5. Coiled coils occupy residues 410–442 (LRRR…YDQL) and 477–503 (KKQL…DTEQ).

Belongs to the TRAFAC class TrmE-Era-EngA-EngB-Septin-like GTPase superfamily. AIG1/Toc34/Toc159-like paraseptin GTPase family. TOC159 subfamily. As to quaternary structure, homodimer. Part of the TOC core complex that includes 1 protein for the specific recognition of transit peptides surrounded by a ring composed of four proteins forming translocation channels, and four to five GTP-binding proteins providing energy. This core complex can interact with components of the TIC complex to form a larger import complex. Chloroplastic protein precursor such as prSS (precursor of the RuBisCO small subunit) interacts with these complexes. The TOC complex contains a specific subset of polar lipids such as digalactosyldiacylglyceride (DGDG), phosphatidylcholine (PC) and phosphatidylglycerol (PG). Interacts with TOC33 and TOC75. The cofactor is Mg(2+). As to expression, expressed in seedlings, leaves, flowers, and roots.

Its subcellular location is the plastid. The protein resides in the chloroplast outer membrane. It is found in the cytoplasm. Its function is as follows. GTPase involved in protein precursor import into chloroplasts. Seems to recognize chloroplast-destined precursor proteins and regulate their presentation to the translocation channel through GTP hydrolysis. Probably specialized in the import of nuclear encoded photosynthetic preproteins from the cytoplasm to the chloroplast. The protein is Translocase of chloroplast 90, chloroplastic (TOC90) of Arabidopsis thaliana (Mouse-ear cress).